A 907-amino-acid chain; its full sequence is Anaphase-promoting complex subunit 2 (907 aa).

Disordered regions lie at residues 203–228 (NNSKDLEFNDQQQEEEEEEEENEEES) and 790–838 (NKEK…AKEK). Composition is skewed to acidic residues over residues 214 to 226 (QQEEEEEEEENEE) and 804 to 830 (ENDDQDESSSDDDDDDNNIVVEEEEEE).

Belongs to the cullin family. The APC/C is composed of at least 13 subunits that stay tightly associated throughout the cell cycle: anapc1, anapc2, anapc3, anapc4, anapc5, anapc6, anapc7, anapc8, anapc10, anapc11, cdc20, cdc26 and cdh1.

The protein resides in the nucleus. It functions in the pathway protein modification; protein ubiquitination. Functionally, component of the anaphase promoting complex/cyclosome (APC/C), a cell cycle-regulated E3 ubiquitin-protein ligase complex that controls progression through mitosis and the G1 phase of the cell cycle. The chain is Anaphase-promoting complex subunit 2 (anapc2) from Dictyostelium discoideum (Social amoeba).